The chain runs to 136 residues: MARTKQTARKSTGGKAPRKQLASKAARKAAPATGGVKKPHRYRPGTVALREIRRYQKSTELLIRKLPFQRLVREIAQDFKTDLRFQSSAIGALQEAVEAYLVSLFEDTNLCAIHGKRVTIQPKDMQLARRLRGERS.

The segment at 1 to 42 (MARTKQTARKSTGGKAPRKQLASKAARKAAPATGGVKKPHRY) is disordered. Lysine 5 is subject to N6,N6,N6-trimethyllysine; alternate. Residue lysine 5 is modified to N6,N6-dimethyllysine; alternate. An N6-methyllysine; alternate mark is found at lysine 5 and lysine 10. Lysine 10 is subject to N6-acetyllysine; alternate. Serine 11 is modified (phosphoserine). N6,N6-dimethyllysine; alternate is present on lysine 15. Lysine 15, lysine 19, lysine 24, lysine 28, and lysine 37 each carry N6-acetyllysine; alternate. 4 positions are modified to N6-methyllysine; alternate: lysine 19, lysine 24, lysine 28, and lysine 37. Residues 19–32 (KQLASKAARKAAPA) show a composition bias toward low complexity. 2 positions are modified to N6,N6,N6-trimethyllysine; alternate: lysine 28 and lysine 37. N6,N6-dimethyllysine; alternate occurs at positions 28 and 37. 2 positions are modified to N6-acetyllysine: lysine 57 and lysine 65. Lysine 80 is modified (N6,N6,N6-trimethyllysine; alternate). An N6,N6-dimethyllysine; alternate modification is found at lysine 80. Lysine 80 is subject to N6-methyllysine; alternate.

The protein belongs to the histone H3 family. As to quaternary structure, the nucleosome is a histone octamer containing two molecules each of H2A, H2B, H3 and H4 assembled in one H3-H4 heterotetramer and two H2A-H2B heterodimers. The octamer wraps approximately 147 bp of DNA. Post-translationally, phosphorylated by ark1 to form H3S10ph in a cell cycle-dependent manner during mitosis and meiosis. H3S10ph is also formed by ssp2, promotes subsequent H3K14ac formation by gcn5, and is required for transcriptional activation through TBP recruitment to the promoters. Dephosphorylation is performed by sds21. In terms of processing, mono-, di- and trimethylated by the COMPASS complex to form H3K4me1/2/3. H3K4me activates gene expression by regulating transcription elongation and plays a role in telomere length maintenance. H3K4me enrichment correlates with transcription levels, and occurs in a 5' to 3' gradient with H3K4me3 enrichment at the 5'-end of genes, shifting to H3K4me2 and then H3K4me1. Methylated by clr4 to form H3K9me1. H3K9me1 represents a specific tag for epigenetic transcriptional repression by recruiting swi6/HP1 to methylated histones. Targeting to histone probably involves clr3 and rik1. Essential for silencing of centromeres and directional switching of the mating type. Methylated by set2 to form H3K36me. H3K36me represses gene expression. Methylated by dot1 to form H3K79me. H3K79me is required for association of SIR proteins with telomeric regions and for telomeric silencing. The COMPASS-mediated formation of H3K4me2/3 and the dot1-mediated formation of H3K79me require H2BK123ub1. Acetylation of histone H3 leads to transcriptional activation. H3K14ac formation by gcn5 is promoted by H3S10ph. H3K14ac can also be formed by esa1. H3K56ac formation occurs predominantly in newly synthesized H3 molecules during G1, S and G2/M of the cell cycle and may be involved in DNA repair.

The protein resides in the nucleus. It localises to the chromosome. Functionally, core component of nucleosome. Nucleosomes wrap and compact DNA into chromatin, limiting DNA accessibility to the cellular machineries which require DNA as a template. Histones thereby play a central role in transcription regulation, DNA repair, DNA replication and chromosomal stability. DNA accessibility is regulated via a complex set of post-translational modifications of histones, also called histone code, and nucleosome remodeling. In Schizosaccharomyces pombe (strain 972 / ATCC 24843) (Fission yeast), this protein is Histone H3.1/H3.2 (hht1).